Reading from the N-terminus, the 204-residue chain is Linker for activation of T-cells family member 2 (204 aa).

Topologically, residues methionine 1–leucine 7 are extracellular. Residues leucine 8 to valine 28 form a helical; Signal-anchor for type III membrane protein membrane-spanning segment. S-palmitoyl cysteine attachment occurs at residues cysteine 27 and cysteine 30. Over glutamine 29–isoleucine 204 the chain is Cytoplasmic. Residue tyrosine 60 is modified to Phosphotyrosine. Phosphoserine is present on residues serine 61 and serine 96. Phosphotyrosine occurs at positions 140, 161, and 193. Residues lysine 147 to isoleucine 204 form a disordered region.

In terms of assembly, when phosphorylated, interacts with GRB2. May also interact with SOS1, GAB1 and CBL. In terms of processing, phosphorylated on tyrosines following cross-linking of BCR in B-cells, high affinity IgG receptor (FCGR1) in myeloid cells, or high affinity IgE receptor (FCER1) in mast cells; which induces the recruitment of GRB2.

The protein localises to the cell membrane. Functionally, involved in FCER1 (high affinity immunoglobulin epsilon receptor)-mediated signaling in mast cells. May also be involved in BCR (B-cell antigen receptor)-mediated signaling in B-cells and FCGR1 (high affinity immunoglobulin gamma Fc receptor I)-mediated signaling in myeloid cells. Couples activation of these receptors and their associated kinases with distal intracellular events through the recruitment of GRB2. The polypeptide is Linker for activation of T-cells family member 2 (Lat2) (Rattus norvegicus (Rat)).